A 132-amino-acid polypeptide reads, in one-letter code: Small ribosomal subunit protein uS19 (132 aa).

Belongs to the universal ribosomal protein uS19 family.

Protein S19 forms a complex with S13 that binds strongly to the 16S ribosomal RNA. This chain is Small ribosomal subunit protein uS19, found in Korarchaeum cryptofilum (strain OPF8).